Here is a 727-residue protein sequence, read N- to C-terminus: Translation initiation factor IF-2, mitochondrial (727 aa).

The transit peptide at 1–29 (MNQKLLKLENLLRFHTIYRQLHSLCQRRA) directs the protein to the mitochondrion. One can recognise a tr-type G domain in the interval 178–348 (PRSPVVTIMG…VALAEMLELK (171 aa)). The segment at 187–194 (GHVDHGKT) is G1. Position 187–194 (187–194 (GHVDHGKT)) interacts with GTP. Residues 212 to 216 (GITQH) form a G2 region. GTP-binding positions include 234–237 (DTPG) and 288–291 (NKCD). Positions 234–237 (DTPG) are G3. Residues 288–291 (NKCD) are G4. Residues 324 to 326 (SAL) are G5. The residue at position 688 (Thr688) is a Phosphothreonine.

Belongs to the TRAFAC class translation factor GTPase superfamily. Classic translation factor GTPase family. IF-2 subfamily. Monomer. As to expression, expressed in all tissues examined. Highest level in skeletal muscle.

The protein localises to the mitochondrion. Functionally, one of the essential components for the initiation of protein synthesis. Protects formylmethionyl-tRNA from spontaneous hydrolysis and promotes its binding to the 30S ribosomal subunits. Also involved in the hydrolysis of GTP during the formation of the 70S ribosomal complex. This is Translation initiation factor IF-2, mitochondrial (MTIF2) from Homo sapiens (Human).